A 554-amino-acid chain; its full sequence is MSYYQHPLDVTGLPSWKALEEHRLAMQHFSMREAFKADPTRFDDLSVSCSGLFLDYSKNLITPETRTLLVNLAREAGVEQAARAMFEGERINASENRPVLHTALRRPMGDSVMVDGKNIMRDVHTALAQMTDIVTRIHNNLWRGFSDKTITDVVNIGIGGSFLGPQLVSEALLPFTQHGVRTHYLANIDGSEFREVTAKLNVETTLFIISSKTFGTLETLKNAQAARNWYLGKGGTEEKLYRHFIAVTSNKQAAVDFGIREKNIFPMWDWVGGRYSLWSAIGLPIALAIGMSNFKDLLSGAYSMDQHFLSEPFESNMPVLLAMLGIWYHNFWGAQSYAFLPYDHYLRNFVKHLQQMDMESNGKSVRQDGTPVSCSTGPVIWGGVGANGQHAYHQLLHQGTPLIPADFIVPVVSHNPVADHHEWLYANCLSQSQALMLGKTREEAEAELRAKGLSEAEVQRLAPHKVIPGNRPSNTLVMETISPGRLGALIALYEHKVFVQGVIWGINSFDQWGVELGKELGKAVYNQMTRFDAAPAEDASTQGLIDFFRGRHRG.

The Proton donor role is filled by glutamate 359. Active-site residues include histidine 390 and lysine 518.

This sequence belongs to the GPI family.

It is found in the cytoplasm. The enzyme catalyses alpha-D-glucose 6-phosphate = beta-D-fructose 6-phosphate. The protein operates within carbohydrate biosynthesis; gluconeogenesis. It functions in the pathway carbohydrate degradation; glycolysis; D-glyceraldehyde 3-phosphate and glycerone phosphate from D-glucose: step 2/4. Its function is as follows. Catalyzes the reversible isomerization of glucose-6-phosphate to fructose-6-phosphate. This is Glucose-6-phosphate isomerase from Stutzerimonas stutzeri (strain A1501) (Pseudomonas stutzeri).